Reading from the N-terminus, the 175-residue chain is Hypoxanthine-guanine phosphoribosyltransferase (175 aa).

Residues Lys-40 and Gly-41 each coordinate diphosphate. The Mg(2+) site is built by Glu-96 and Asp-97. Catalysis depends on Asp-100, which acts as the Proton acceptor. GMP is bound by residues Lys-128, 149 to 150 (FL), and Asp-156. Residue Arg-162 participates in diphosphate binding.

Belongs to the purine/pyrimidine phosphoribosyltransferase family. Mg(2+) is required as a cofactor.

Its subcellular location is the cytoplasm. The catalysed reaction is IMP + diphosphate = hypoxanthine + 5-phospho-alpha-D-ribose 1-diphosphate. It catalyses the reaction GMP + diphosphate = guanine + 5-phospho-alpha-D-ribose 1-diphosphate. It participates in purine metabolism; IMP biosynthesis via salvage pathway; IMP from hypoxanthine: step 1/1. The protein operates within purine metabolism; GMP biosynthesis via salvage pathway; GMP from guanine: step 1/1. Purine salvage pathway enzyme that catalyzes the transfer of the ribosyl-5-phosphate group from 5-phospho-alpha-D-ribose 1-diphosphate (PRPP) to the N9 position of the 6-oxopurines hypoxanthine and guanine to form the corresponding ribonucleotides IMP (inosine 5'-monophosphate) and GMP (guanosine 5'-monophosphate), with the release of PPi. The sequence is that of Hypoxanthine-guanine phosphoribosyltransferase (hpt) from Mycoplasma pneumoniae (strain ATCC 29342 / M129 / Subtype 1) (Mycoplasmoides pneumoniae).